The primary structure comprises 538 residues: Putative outer membrane porin BglH (538 aa).

The first 25 residues, 1–25 (MFRQNLITSAILLMAPLAFSAQSLA), serve as a signal peptide directing secretion. The tract at residues 52–82 (KDEEKKKYTPATVNRSVSTNDQGYAANPFPT) is disordered. The span at 62–73 (ATVNRSVSTNDQ) shows a compositional bias: polar residues.

Belongs to the porin LamB (TC 1.B.3) family.

The protein resides in the cell outer membrane. In terms of biological role, may be a sugar porin with a broad carbohydrate specificity. This is Putative outer membrane porin BglH (bglH) from Shigella flexneri.